The primary structure comprises 624 residues: MTSPQALQLIKDPDRLESRLKEIPAEPGVYFMRDSQDQILYIGKSKKLRSRVRSYFRKFNELGPRLELMVRQVAEIEFIVTDTEAEALALEANLIKQHQPHFNVLLKDDKKYPYLCITWSEAYPRIFITRKRRAEAKDDRYYGPYTDTHLLRQTLGLVKRIFPLRQRPKPLFKDRPCLNFDIGRCPGVCQQLIASEDYRKTIHKVAMIFQGRTSELIDTLTPQMEAAAENLNFEQAARIRDQINGLKTLGEEQKVSLPDDTVSRDAIALAADEQHACIQLFQIRAGRLVGRLGFVADAQSGPPGAILQRVLEEHYAGADPVEIPAEILVQTELPEAEMLATYLTEYKGRKVTLLVPQRQSKAELIEMVERNAQYELARTQRFSDRNAEAQKDLAELLDLPELPQRIEGYDISHVQGSDAVASRVVFIDGLPAKQHYRHYKIKNPNVTAGHSDDFASLAEVVQRRFRKFIEHPETDRLSDPDWPDLIMIDGGKGQLSAVVNALSGTGLLEDLQIVSLAKQREEIFLPGESLPLNTDPDQPGVQLLRRLRDEAHRFAVSFHRQQRTERMRRSRLDEIPGLGYERQKQLLAAFRSIDYIREASPEQLATVPLIGPRLAQQIYDYFHP.

The GIY-YIG domain occupies 25 to 104 (AEPGVYFMRD…IKQHQPHFNV (80 aa)). In terms of domain architecture, UVR spans 214-249 (SELIDTLTPQMEAAAENLNFEQAARIRDQINGLKTL).

Belongs to the UvrC family. Interacts with UvrB in an incision complex.

The protein localises to the cytoplasm. The UvrABC repair system catalyzes the recognition and processing of DNA lesions. UvrC both incises the 5' and 3' sides of the lesion. The N-terminal half is responsible for the 3' incision and the C-terminal half is responsible for the 5' incision. The polypeptide is UvrABC system protein C (Cyanothece sp. (strain PCC 7425 / ATCC 29141)).